The sequence spans 64 residues: uncharacterized protein (64 aa).

The protein localises to the mitochondrion. This is an uncharacterized protein from Marchantia polymorpha (Common liverwort).